Here is a 370-residue protein sequence, read N- to C-terminus: Proline-rich protein 5-like (370 aa).

Ser-28 carries the post-translational modification Phosphoserine. Positions 327–370 are disordered; the sequence is PTFPPPHRQCSSEPSILDSPDEMELEDVASGSQEDSELNCASLS.

Belongs to the PROTOR family. Interacts with the mammalian target of rapamycin complex 2 (mTORC2) which contains MTOR, MLST8, PRR5, RICTOR, MAPKAP1 and DEPTOR. Interacts with RFFL. Interacts (via C-terminus) with ZFP36 (via C-terminus); this interaction may accelerate ZFP36-mediated mRNA decay during stress. Interacts with RICTOR. In terms of processing, ubiquitinated. Ubiquitination by RFFL promotes proteasomal degradation of PRR5L thereby modifying the substrate-specific activity of the mTORC2 complex. Ubiquitination by RFFL is stimulated by LPA/lysophosphatidic acid.

Functionally, associates with the mTORC2 complex that regulates cellular processes including survival and organization of the cytoskeleton. Regulates the activity of the mTORC2 complex in a substrate-specific manner preventing for instance the specific phosphorylation of PKCs and thereby controlling cell migration. Plays a role in the stimulation of ZFP36-mediated mRNA decay of several ZFP36-associated mRNAs, such as TNF-alpha and GM-CSF, in response to stress. Required for ZFP36 localization to cytoplasmic stress granule (SG) and P-body (PB) in response to stress. The sequence is that of Proline-rich protein 5-like (Prr5l) from Rattus norvegicus (Rat).